We begin with the raw amino-acid sequence, 174 residues long: Crossover junction endodeoxyribonuclease RuvC (174 aa).

Catalysis depends on residues Asp-8, Glu-68, and Asp-140. Mg(2+) contacts are provided by Asp-8, Glu-68, and Asp-140.

Belongs to the RuvC family. As to quaternary structure, homodimer which binds Holliday junction (HJ) DNA. The HJ becomes 2-fold symmetrical on binding to RuvC with unstacked arms; it has a different conformation from HJ DNA in complex with RuvA. In the full resolvosome a probable DNA-RuvA(4)-RuvB(12)-RuvC(2) complex forms which resolves the HJ. Mg(2+) is required as a cofactor.

It is found in the cytoplasm. The enzyme catalyses Endonucleolytic cleavage at a junction such as a reciprocal single-stranded crossover between two homologous DNA duplexes (Holliday junction).. Its function is as follows. The RuvA-RuvB-RuvC complex processes Holliday junction (HJ) DNA during genetic recombination and DNA repair. Endonuclease that resolves HJ intermediates. Cleaves cruciform DNA by making single-stranded nicks across the HJ at symmetrical positions within the homologous arms, yielding a 5'-phosphate and a 3'-hydroxyl group; requires a central core of homology in the junction. The consensus cleavage sequence is 5'-(A/T)TT(C/G)-3'. Cleavage occurs on the 3'-side of the TT dinucleotide at the point of strand exchange. HJ branch migration catalyzed by RuvA-RuvB allows RuvC to scan DNA until it finds its consensus sequence, where it cleaves and resolves the cruciform DNA. The sequence is that of Crossover junction endodeoxyribonuclease RuvC from Legionella pneumophila (strain Lens).